The chain runs to 1061 residues: Ceruloplasmin (1061 aa).

Positions 1–19 (MKFLLLSTFIFLYSSLALA) are cleaved as a signal peptide. Plastocyanin-like domains are found at residues 20-199 (RDKH…LILC), 208-356 (KEKN…VRDC), 369-555 (HVRH…MKIC), 565-713 (RQKD…VNQC), 725-895 (GERT…LIVC), and 903-1057 (FSPK…VEQE). Tyrosine 55, glycine 64, and tyrosine 67 together coordinate Na(+). Cu(2+) contacts are provided by histidine 120 and histidine 122. Histidine 120 is an O2 binding site. Position 128 (lysine 128) interacts with Ca(2+). A glycan (N-linked (GlcNAc...) asparagine) is linked at asparagine 138. Glutamine 143, aspartate 146, and aspartate 147 together coordinate Ca(2+). Cysteine 173 and cysteine 199 are oxidised to a cystine. The Cu(2+) site is built by histidine 179 and histidine 181. Histidine 179 is a binding site for O2. Residue asparagine 226 is glycosylated (N-linked (GlcNAc...) asparagine). Residue serine 255 participates in Na(+) binding. The cysteines at positions 275 and 356 are disulfide-linked. 3 residues coordinate Cu(2+): histidine 294, cysteine 337, and histidine 342. N-linked (GlcNAc...) asparagine glycosylation is present at asparagine 396. Residues phenylalanine 407, glycine 416, and tyrosine 419 each contribute to the Na(+) site. Cysteine 529 and cysteine 555 are disulfide-bonded. N-linked (GlcNAc...) asparagine glycosylation is present at asparagine 583. Na(+) is bound at residue serine 612. Cysteine 632 and cysteine 713 are joined by a disulfide. Positions 651, 694, 699, and 704 each coordinate Cu(2+). Residue cysteine 694 is the Nucleophile; for glutathione peroxidase activity of the active site. A glycan (N-linked (GlcNAc...) asparagine) is linked at asparagine 757. Positions 762, 771, and 774 each coordinate Na(+). The cysteines at positions 869 and 895 are disulfide-linked. N-linked (GlcNAc...) asparagine glycosylation is present at asparagine 921. Serine 950 contributes to the Na(+) binding site. Cu(2+) is bound by residues histidine 989, histidine 992, histidine 994, histidine 1034, cysteine 1035, histidine 1036, histidine 1040, and methionine 1045. The O2 site is built by histidine 992 and histidine 994. Histidine 1036 provides a ligand contact to O2.

This sequence belongs to the multicopper oxidase family. As to quaternary structure, found in a complex with MPO and LTF; interacts directly with MPO and LTF, which allows Fe(3+) incorporation into LTF, activation of CP ferroxidase activity and protection of CP antioxidant properties by MPO. Requires Cu(2+) as cofactor. As to expression, expressed in many tissues, including liver, eye and brain.

The protein resides in the secreted. The enzyme catalyses 4 Fe(2+) + O2 + 4 H(+) = 4 Fe(3+) + 2 H2O. It carries out the reaction 4 Cu(+) + O2 + 4 H(+) = 4 Cu(2+) + 2 H2O. The catalysed reaction is a hydroperoxide + 2 glutathione = an alcohol + glutathione disulfide + H2O. It catalyses the reaction 4 nitric oxide + O2 + 2 H2O = 4 nitrite + 4 H(+). The enzyme catalyses 2 glutathione + H2O2 = glutathione disulfide + 2 H2O. In terms of biological role, multifunctional blue, copper-binding (6-7 atoms per molecule) glycoprotein. It has ferroxidase activity oxidizing Fe(2+) to Fe(3+) without releasing radical oxygen species. It is involved in iron transport across the cell membrane. Copper ions provide a large number of enzymatic activites. Oxidizes highly toxic ferrous ions to the ferric state for further incorporation onto apo-transferrins, catalyzes Cu(+) oxidation and promotes the oxidation of biogenic amines such as norepinephrin and serotonin. Provides Cu(2+) ions for the ascorbate-mediated deaminase degradation of the heparan sulfate chains of GPC1. Has glutathione peroxidase-like activity, can remove both hydrogen peroxide and lipid hydroperoxide in the presence of thiols. Also shows NO-oxidase and NO2 synthase activities that determine endocrine NO homeostasis. This Mus musculus (Mouse) protein is Ceruloplasmin (Cp).